The sequence spans 346 residues: Uroporphyrinogen decarboxylase (346 aa).

Substrate-binding positions include 21–25 (RQAGR), aspartate 71, tyrosine 146, serine 201, and histidine 316.

This sequence belongs to the uroporphyrinogen decarboxylase family. In terms of assembly, homodimer.

It is found in the cytoplasm. The enzyme catalyses uroporphyrinogen III + 4 H(+) = coproporphyrinogen III + 4 CO2. Its pathway is porphyrin-containing compound metabolism; protoporphyrin-IX biosynthesis; coproporphyrinogen-III from 5-aminolevulinate: step 4/4. In terms of biological role, catalyzes the decarboxylation of four acetate groups of uroporphyrinogen-III to yield coproporphyrinogen-III. This Rickettsia rickettsii (strain Iowa) protein is Uroporphyrinogen decarboxylase.